We begin with the raw amino-acid sequence, 539 residues long: Alpha-aminoadipic semialdehyde dehydrogenase (539 aa).

A mitochondrion-targeting transit peptide spans 1–26; the sequence is MWRVPRRLCVQSVKTSKLSGPWSRPA. Residues K86, K94, and K97 each carry the N6-acetyllysine; alternate modification. K86, K94, and K97 each carry N6-succinyllysine; alternate. NAD(+) is bound by residues 192–194, K218, 258–259, 274–275, 274–279, and 296–297; these read TAF, GT, GS, GSTQVG, and EL. E296 (proton acceptor) is an active-site residue. C330 functions as the Nucleophile in the catalytic mechanism. T331 is a binding site for (S)-2-amino-6-oxohexanoate. NAD(+) is bound at residue E427. An N6-acetyllysine modification is found at K462. Residues G489 and A490 each coordinate (S)-2-amino-6-oxohexanoate. Residue K500 is modified to N6-acetyllysine. The residue at position 537 (K537) is an N6-succinyllysine.

This sequence belongs to the aldehyde dehydrogenase family. As to quaternary structure, homotetramer. Present in liver, kidney, brain and pancreas, and at lower levels in jejunum, duodenum, stomach and testes (at protein level).

The protein resides in the cytoplasm. It localises to the cytosol. Its subcellular location is the nucleus. The protein localises to the mitochondrion. It catalyses the reaction nonanal + NAD(+) + H2O = nonanoate + NADH + 2 H(+). The catalysed reaction is (S)-2-amino-6-oxohexanoate + NAD(+) + H2O = L-2-aminoadipate + NADH + 2 H(+). It carries out the reaction betaine aldehyde + NAD(+) + H2O = glycine betaine + NADH + 2 H(+). The enzyme catalyses an aldehyde + NAD(+) + H2O = a carboxylate + NADH + 2 H(+). It catalyses the reaction hexanal + NAD(+) + H2O = hexanoate + NADH + 2 H(+). The catalysed reaction is octanal + NAD(+) + H2O = octanoate + NADH + 2 H(+). It carries out the reaction (E)-non-2-enal + NAD(+) + H2O = (E)-non-2-enoate + NADH + 2 H(+). The enzyme catalyses (E)-4-hydroxynon-2-enal + NAD(+) + H2O = (E)-4-hydroxynon-2-enoate + NADH + 2 H(+). The protein operates within amine and polyamine biosynthesis; betaine biosynthesis via choline pathway; betaine from betaine aldehyde: step 1/1. Functionally, multifunctional enzyme mediating important protective effects. Metabolizes betaine aldehyde to betaine, an important cellular osmolyte and methyl donor. Protects cells from oxidative stress by metabolizing a number of lipid peroxidation-derived aldehydes. Involved in lysine catabolism. In Mus musculus (Mouse), this protein is Alpha-aminoadipic semialdehyde dehydrogenase.